Consider the following 199-residue polypeptide: Inactive glutathione S-transferase D3 (199 aa).

The 64-residue stretch at 1–64 folds into the GST N-terminal domain; sequence MVGKALGLEF…YLVEKYGKDD (64 aa). Residues 34 to 36 and 48 to 50 contribute to the glutathione site; these read HSI and ESR. The GST C-terminal domain maps to 70–199; it reads DIQKQAVINQ…RIEEKQNAAK (130 aa).

Belongs to the GST superfamily. Delta family. Homodimer.

Has no glutathione S-transferase activity. This Drosophila melanogaster (Fruit fly) protein is Inactive glutathione S-transferase D3.